The sequence spans 213 residues: Glycerol-3-phosphate acyltransferase (213 aa).

Transmembrane regions (helical) follow at residues 3–23, 48–68, 71–91, 119–139, 144–164, and 165–185; these read IIIL…GLWI, ILGV…GTLA, LPLI…LAVI, PFFL…FSMI, VVAA…GFIL, and TSYD…IIFR.

This sequence belongs to the PlsY family. In terms of assembly, probably interacts with PlsX.

It is found in the cell membrane. It catalyses the reaction an acyl phosphate + sn-glycerol 3-phosphate = a 1-acyl-sn-glycero-3-phosphate + phosphate. The protein operates within lipid metabolism; phospholipid metabolism. Functionally, catalyzes the transfer of an acyl group from acyl-phosphate (acyl-PO(4)) to glycerol-3-phosphate (G3P) to form lysophosphatidic acid (LPA). This enzyme utilizes acyl-phosphate as fatty acyl donor, but not acyl-CoA or acyl-ACP. The chain is Glycerol-3-phosphate acyltransferase from Lactococcus lactis subsp. cremoris (strain SK11).